The sequence spans 374 residues: Coiled-coil domain-containing protein 89 (374 aa).

Residues 1 to 40 (MRAPMLQKQQAPRMDTPPPEERLEKQNEKLNNQEEETEFK) form a disordered region. Threonine 16 bears the Phosphothreonine mark. Residues 19-32 (PEERLEKQNEKLNN) show a composition bias toward basic and acidic residues. A coiled-coil region spans residues 20 to 351 (EERLEKQNEK…DELRLQSEAF (332 aa)).

Belongs to the CCDC89 family. Interacts with HEY1.

Its subcellular location is the cytoplasm. It localises to the nucleus. The chain is Coiled-coil domain-containing protein 89 (CCDC89) from Homo sapiens (Human).